A 146-amino-acid polypeptide reads, in one-letter code: Shadow of prion protein (146 aa).

Positions 1-24 are cleaved as a signal peptide; it reads MRGTSAVCWSLLLLIALLSQNVTA. N94 carries N-linked (GlcNAc...) asparagine glycosylation. Residue S108 is the site of GPI-anchor amidated serine attachment. Residues 109 to 146 constitute a propeptide, removed in mature form; sequence GTCPLSSHLSFRLIISIGAILTCSSSSIYVSTKINLGK.

This sequence belongs to the SPRN family.

The protein localises to the cell membrane. Prion-like protein that has PrP(C)-like neuroprotective activity. This is Shadow of prion protein (sprn) from Xenopus tropicalis (Western clawed frog).